Consider the following 488-residue polypeptide: Zinc finger protein 345 (488 aa).

15 consecutive C2H2-type zinc fingers follow at residues 62–84 (LECK…QRIH), 90–112 (YECK…QRIH), 118–140 (FECK…QRIH), 146–168 (YECK…QIIH), 174–196 (YECK…HRIH), 202–224 (YECI…RRIH), 230–252 (YECK…QRIH), 258–280 (YICN…QRIH), 286–308 (YVCK…QRIH), 314–336 (YECK…QRMH), 342–364 (YECK…HRIH), 370–392 (YECK…QLIH), 398–420 (YECK…QRIH), 426–448 (YECK…QRIH), and 454–476 (YECK…KKSH).

This sequence belongs to the krueppel C2H2-type zinc-finger protein family.

The protein resides in the nucleus. May be involved in transcriptional regulation. The sequence is that of Zinc finger protein 345 (ZNF345) from Homo sapiens (Human).